The sequence spans 141 residues: MFFGEFEHALDAKGRLIIPAKFRELLGTSFVITRGMDGCIFGYPAERWATLQAQLDDLPLTRKDARAFVRFFYAAAAECELDKQGRVMIPATLRQYAKLEKQCVIVGVSDRFEIWGAEHWQQFETETAANFDDLAENLIDF.

2 consecutive SpoVT-AbrB domains span residues 5–47 (EFEH…PAER) and 76–119 (AAEC…GAEH).

The protein belongs to the MraZ family. As to quaternary structure, forms oligomers.

It localises to the cytoplasm. The protein resides in the nucleoid. This Lactiplantibacillus plantarum (strain ATCC BAA-793 / NCIMB 8826 / WCFS1) (Lactobacillus plantarum) protein is Transcriptional regulator MraZ.